We begin with the raw amino-acid sequence, 277 residues long: Formamidopyrimidine-DNA glycosylase (277 aa).

Pro2 acts as the Schiff-base intermediate with DNA in catalysis. The Proton donor role is filled by Glu3. Lys60 serves as the catalytic Proton donor; for beta-elimination activity. Residues His94, Arg113, and Arg158 each contribute to the DNA site. The FPG-type zinc-finger motif lies at 243–277 (WVYNRAGEPCKVCGDVIQRIKLGGRSSHFCRQCQV). Residue Arg267 is the Proton donor; for delta-elimination activity of the active site.

This sequence belongs to the FPG family. Monomer. It depends on Zn(2+) as a cofactor.

It carries out the reaction Hydrolysis of DNA containing ring-opened 7-methylguanine residues, releasing 2,6-diamino-4-hydroxy-5-(N-methyl)formamidopyrimidine.. The catalysed reaction is 2'-deoxyribonucleotide-(2'-deoxyribose 5'-phosphate)-2'-deoxyribonucleotide-DNA = a 3'-end 2'-deoxyribonucleotide-(2,3-dehydro-2,3-deoxyribose 5'-phosphate)-DNA + a 5'-end 5'-phospho-2'-deoxyribonucleoside-DNA + H(+). Its function is as follows. Involved in base excision repair of DNA damaged by oxidation or by mutagenic agents. Acts as a DNA glycosylase that recognizes and removes damaged bases. Has a preference for oxidized purines, such as 7,8-dihydro-8-oxoguanine (8-oxoG). Has AP (apurinic/apyrimidinic) lyase activity and introduces nicks in the DNA strand. Cleaves the DNA backbone by beta-delta elimination to generate a single-strand break at the site of the removed base with both 3'- and 5'-phosphates. This Trichormus variabilis (strain ATCC 29413 / PCC 7937) (Anabaena variabilis) protein is Formamidopyrimidine-DNA glycosylase.